The sequence spans 299 residues: Elongation factor Ts (299 aa).

The tract at residues 81–84 is involved in Mg(2+) ion dislocation from EF-Tu; the sequence is TDFV.

The protein belongs to the EF-Ts family.

It is found in the cytoplasm. Its function is as follows. Associates with the EF-Tu.GDP complex and induces the exchange of GDP to GTP. It remains bound to the aminoacyl-tRNA.EF-Tu.GTP complex up to the GTP hydrolysis stage on the ribosome. The polypeptide is Elongation factor Ts (Halothermothrix orenii (strain H 168 / OCM 544 / DSM 9562)).